The sequence spans 592 residues: Calnexin (592 aa).

The N-terminal stretch at 1 to 20 (MEGKWLLCMLLVLGTAIVEA) is a signal peptide. Over 21 to 481 (HDGHDDDVID…QMIEAAEERP (461 aa)) the chain is Lumenal. Ca(2+) is bound by residues serine 74 and aspartate 117. Lysine 137 bears the N6-acetyllysine mark. Cysteines 160 and 194 form a disulfide. Residues tyrosine 164, lysine 166, tyrosine 185, and aspartate 192 each coordinate an alpha-D-glucoside. The interval 260-345 (GNLLNDMTPP…AEKPEDWDED (86 aa)) is disordered. The segment covering 274-319 (REIEDPEDRKPEDWDERPKIPDPEAVKPDDWDEDAPAKIPDEEATK) has biased composition (basic and acidic residues). Residues 276-409 (IEDPEDRKPE…RKIPNPDFFE (134 aa)) form a p domain (Extended arm) region. 5 tandem repeats follow at residues 278-290 (DPED…WDER), 295-307 (DPEA…WDED), 314-326 (DEEA…WLDD), 333-345 (DPDA…WDED), and 348-358 (GEWEAPQIANP). 4 X approximate repeats stretches follow at residues 278–345 (DPED…WDED) and 348–405 (GEWE…IPNP). Residues 323–345 (WLDDEPEYVPDPDAEKPEDWDED) show a composition bias toward acidic residues. Positions 326–359 (DEPEYVPDPDAEKPEDWDEDMDGEWEAPQIANPK) are interaction with PPIB. An intrachain disulfide couples cysteine 360 to cysteine 366. Repeat copies occupy residues 367–377 (GVWQRPMIDNP), 381–391 (GKWKPPMIDNP), and 395–405 (GIWKPRKIPNP). Glutamate 425 contacts an alpha-D-glucoside. Aspartate 436 provides a ligand contact to Ca(2+). Residues 482 to 502 (WLWVVYILTVALPVFLVILFC) form a helical membrane-spanning segment. S-palmitoyl cysteine attachment occurs at residues cysteine 502 and cysteine 503. The Cytoplasmic portion of the chain corresponds to 503–592 (CSGKKQTSAM…SPRNRKPRRE (90 aa)). A sufficient to mediate interaction with SGIP1 region spans residues 503–592 (CSGKKQTSAM…SPRNRKPRRE (90 aa)). The disordered stretch occupies residues 511 to 592 (AMEYKKTDAP…SPRNRKPRRE (82 aa)). Acidic residues predominate over residues 525–547 (KEEEEEKEEEKDKGDEEEEGEEK). Serine 554 is subject to Phosphoserine. Threonine 562 carries the post-translational modification Phosphothreonine. Position 564 is a phosphoserine; by MAPK3 (serine 564). Serine 583 is modified (phosphoserine).

It belongs to the calreticulin family. As to quaternary structure, interacts with MAPK3/ERK1. Interacts with KCNH2. Associates with ribosomes. Interacts with SGIP1; involved in negative regulation of endocytosis. The palmitoylated form interacts with the ribosome-translocon complex component SSR1, promoting efficient folding of glycoproteins. Interacts with SERPINA2P/SERPINA2 and with the S and Z variants of SERPINA1. Interacts with PPIB. Interacts with ZNRF4. Interacts with SMIM22. Interacts with TMX2. Interacts with TMEM35A/NACHO and CHRNA7. Interacts with reticulophagy regulators RETREG2 and RETREG3. Interacts with DNM1L; may form part of a larger protein complex at the ER-mitochondrial interface during mitochondrial fission. Interacts with ADAM7. Post-translationally, phosphorylated at Ser-564 by MAPK3/ERK1. Phosphorylation by MAPK3/ERK1 increases its association with ribosomes. Palmitoylation by DHHC6 leads to the preferential localization to the perinuclear rough ER. It mediates the association of calnexin with the ribosome-translocon complex (RTC) which is required for efficient folding of glycosylated proteins. In terms of processing, ubiquitinated, leading to proteasomal degradation. Probably ubiquitinated by ZNRF4.

It is found in the endoplasmic reticulum membrane. It localises to the mitochondrion membrane. Its subcellular location is the melanosome membrane. Its function is as follows. Calcium-binding protein that interacts with newly synthesized monoglucosylated glycoproteins in the endoplasmic reticulum. It may act in assisting protein assembly and/or in the retention within the ER of unassembled protein subunits. It seems to play a major role in the quality control apparatus of the ER by the retention of incorrectly folded proteins. Associated with partial T-cell antigen receptor complexes that escape the ER of immature thymocytes, it may function as a signaling complex regulating thymocyte maturation. Additionally it may play a role in receptor-mediated endocytosis at the synapse. The sequence is that of Calnexin (CANX) from Pongo abelii (Sumatran orangutan).